A 150-amino-acid polypeptide reads, in one-letter code: MRAVVQRVSQASVTISDNIVAQIEKGLLVFLGISKIDQVSDISWMADKIVNLRIFEDDQNKMNRSLLDIMGDMIVVSQFTLYGDCRKGRRPSFTDSATPEKAKVLYDNFLSYLKEKYPINVQQGEFQAHMKVNIVNDGPVTLLLDSQKLF.

The Gly-cisPro motif, important for rejection of L-amino acids signature appears at 138–139 (GP).

This sequence belongs to the DTD family. In terms of assembly, homodimer.

It localises to the cytoplasm. It catalyses the reaction glycyl-tRNA(Ala) + H2O = tRNA(Ala) + glycine + H(+). The enzyme catalyses a D-aminoacyl-tRNA + H2O = a tRNA + a D-alpha-amino acid + H(+). In terms of biological role, an aminoacyl-tRNA editing enzyme that deacylates mischarged D-aminoacyl-tRNAs. Also deacylates mischarged glycyl-tRNA(Ala), protecting cells against glycine mischarging by AlaRS. Acts via tRNA-based rather than protein-based catalysis; rejects L-amino acids rather than detecting D-amino acids in the active site. By recycling D-aminoacyl-tRNA to D-amino acids and free tRNA molecules, this enzyme counteracts the toxicity associated with the formation of D-aminoacyl-tRNA entities in vivo and helps enforce protein L-homochirality. This is D-aminoacyl-tRNA deacylase from Petrotoga mobilis (strain DSM 10674 / SJ95).